The following is a 331-amino-acid chain: tRNA-dihydrouridine(20/20a) synthase (331 aa).

FMN-binding positions include 18–20 and Gln70; that span reads PML. Cys100 functions as the Proton donor in the catalytic mechanism. FMN is bound by residues Lys139, His172, 212–214, and 234–235; these read NGG and GR.

Belongs to the Dus family. DusA subfamily. The cofactor is FMN.

It catalyses the reaction 5,6-dihydrouridine(20) in tRNA + NADP(+) = uridine(20) in tRNA + NADPH + H(+). It carries out the reaction 5,6-dihydrouridine(20) in tRNA + NAD(+) = uridine(20) in tRNA + NADH + H(+). The catalysed reaction is 5,6-dihydrouridine(20a) in tRNA + NADP(+) = uridine(20a) in tRNA + NADPH + H(+). The enzyme catalyses 5,6-dihydrouridine(20a) in tRNA + NAD(+) = uridine(20a) in tRNA + NADH + H(+). In terms of biological role, catalyzes the synthesis of 5,6-dihydrouridine (D), a modified base found in the D-loop of most tRNAs, via the reduction of the C5-C6 double bond in target uridines. Specifically modifies U20 and U20a in tRNAs. The polypeptide is tRNA-dihydrouridine(20/20a) synthase (Escherichia coli O6:H1 (strain CFT073 / ATCC 700928 / UPEC)).